The chain runs to 83 residues: Cytochrome b559 subunit alpha (83 aa).

Residues 21-35 traverse the membrane as a helical segment; the sequence is VIHSITIPSLFIAGW. H23 serves as a coordination point for heme.

This sequence belongs to the PsbE/PsbF family. Heterodimer of an alpha subunit and a beta subunit. PSII is composed of 1 copy each of membrane proteins PsbA, PsbB, PsbC, PsbD, PsbE, PsbF, PsbH, PsbI, PsbJ, PsbK, PsbL, PsbM, PsbT, PsbX, PsbY, PsbZ, Psb30/Ycf12, at least 3 peripheral proteins of the oxygen-evolving complex and a large number of cofactors. It forms dimeric complexes. Heme b serves as cofactor.

It localises to the plastid. The protein localises to the chloroplast thylakoid membrane. In terms of biological role, this b-type cytochrome is tightly associated with the reaction center of photosystem II (PSII). PSII is a light-driven water:plastoquinone oxidoreductase that uses light energy to abstract electrons from H(2)O, generating O(2) and a proton gradient subsequently used for ATP formation. It consists of a core antenna complex that captures photons, and an electron transfer chain that converts photonic excitation into a charge separation. The sequence is that of Cytochrome b559 subunit alpha from Adiantum capillus-veneris (Maidenhair fern).